The following is a 220-amino-acid chain: Fructose-6-phosphate aldolase (220 aa).

The active-site Schiff-base intermediate with substrate is the Lys85.

It belongs to the transaldolase family. Type 3A subfamily. Homodecamer.

The protein localises to the cytoplasm. It catalyses the reaction beta-D-fructose 6-phosphate = dihydroxyacetone + D-glyceraldehyde 3-phosphate. Catalyzes the reversible formation of fructose 6-phosphate from dihydroxyacetone and D-glyceraldehyde 3-phosphate via an aldolization reaction. The polypeptide is Fructose-6-phosphate aldolase (Salmonella typhi).